A 346-amino-acid polypeptide reads, in one-letter code: Eukaryotic translation initiation factor 3 subunit I (346 aa).

WD repeat units follow at residues Gly8–His49, Gly50–Asp91, Cys145–Asn184, Glu189–Thr228, and Gly286–Met325.

It belongs to the eIF-3 subunit I family. Component of the eukaryotic translation initiation factor 3 (eIF-3) complex.

It localises to the cytoplasm. Component of the eukaryotic translation initiation factor 3 (eIF-3) complex, which is involved in protein synthesis of a specialized repertoire of mRNAs and, together with other initiation factors, stimulates binding of mRNA and methionyl-tRNAi to the 40S ribosome. The eIF-3 complex specifically targets and initiates translation of a subset of mRNAs involved in cell proliferation. This Neurospora crassa (strain ATCC 24698 / 74-OR23-1A / CBS 708.71 / DSM 1257 / FGSC 987) protein is Eukaryotic translation initiation factor 3 subunit I (tif-34).